The following is a 210-amino-acid chain: Riboflavin kinase (210 aa).

Residues 1 to 11 (MRPSNPRPPVT) are compositionally biased toward pro residues. Positions 1–24 (MRPSNPRPPVTGPDSGPEAPFPIR) are disordered. Residues T44 and N46 each coordinate Mg(2+). E113 acts as the Nucleophile in catalysis.

Belongs to the flavokinase family. Requires Zn(2+) as cofactor. Mg(2+) is required as a cofactor.

The catalysed reaction is riboflavin + ATP = FMN + ADP + H(+). Its pathway is cofactor biosynthesis; FMN biosynthesis; FMN from riboflavin (ATP route): step 1/1. Its function is as follows. Catalyzes the phosphorylation of riboflavin (vitamin B2) to form flavin mononucleotide (FMN) coenzyme. The polypeptide is Riboflavin kinase (fmn1) (Emericella nidulans (strain FGSC A4 / ATCC 38163 / CBS 112.46 / NRRL 194 / M139) (Aspergillus nidulans)).